The primary structure comprises 309 residues: uncharacterized protein (309 aa).

Residues 1 to 16 (MAGNSRRRGAVRKAGT) show a composition bias toward basic residues. Residues 1 to 70 (MAGNSRRRGA…AKRTEETETV (70 aa)) are disordered. Residues Gly-261, Ile-281, and Leu-290 each coordinate S-adenosyl-L-methionine.

The protein belongs to the class IV-like SAM-binding methyltransferase superfamily. RNA methyltransferase TrmH family.

This is an uncharacterized protein from Mycolicibacterium paratuberculosis (strain ATCC BAA-968 / K-10) (Mycobacterium paratuberculosis).